The primary structure comprises 92 residues: Protein E7 (92 aa).

The tract at residues M1–E43 is E7 terminal domain. The short motif at L24–E28 is the LXCXE motif; interaction with host RB1 and TMEM173/STING element. A zinc finger spans residues C55–C91. The Nuclear export signal signature appears at I73–L81.

It belongs to the papillomaviridae E7 protein family. As to quaternary structure, homodimer. Homooligomer. Interacts with host RB1; this interaction induces dissociation of RB1-E2F1 complex thereby disrupting RB1 activity. Interacts with host EP300; this interaction represses EP300 transcriptional activity. Interacts with protein E2; this interaction inhibits E7 oncogenic activity. Interacts with host TMEM173/STING; this interaction impairs the ability of TMEM173/STING to sense cytosolic DNA and promote the production of type I interferon (IFN-alpha and IFN-beta). In terms of processing, highly phosphorylated.

It is found in the host cytoplasm. The protein localises to the host nucleus. Plays a role in viral genome replication by driving entry of quiescent cells into the cell cycle. Stimulation of progression from G1 to S phase allows the virus to efficiently use the cellular DNA replicating machinery to achieve viral genome replication. E7 protein has both transforming and trans-activating activities. Induces the disassembly of the E2F1 transcription factor from RB1, with subsequent transcriptional activation of E2F1-regulated S-phase genes. Interferes with host histone deacetylation mediated by HDAC1 and HDAC2, leading to transcription activation. Also plays a role in the inhibition of both antiviral and antiproliferative functions of host interferon alpha. Interaction with host TMEM173/STING impairs the ability of TMEM173/STING to sense cytosolic DNA and promote the production of type I interferon (IFN-alpha and IFN-beta). This chain is Protein E7, found in Homo sapiens (Human).